The sequence spans 234 residues: Leucyl/phenylalanyl-tRNA--protein transferase (234 aa).

It belongs to the L/F-transferase family.

The protein resides in the cytoplasm. It carries out the reaction N-terminal L-lysyl-[protein] + L-leucyl-tRNA(Leu) = N-terminal L-leucyl-L-lysyl-[protein] + tRNA(Leu) + H(+). The catalysed reaction is N-terminal L-arginyl-[protein] + L-leucyl-tRNA(Leu) = N-terminal L-leucyl-L-arginyl-[protein] + tRNA(Leu) + H(+). The enzyme catalyses L-phenylalanyl-tRNA(Phe) + an N-terminal L-alpha-aminoacyl-[protein] = an N-terminal L-phenylalanyl-L-alpha-aminoacyl-[protein] + tRNA(Phe). Its function is as follows. Functions in the N-end rule pathway of protein degradation where it conjugates Leu, Phe and, less efficiently, Met from aminoacyl-tRNAs to the N-termini of proteins containing an N-terminal arginine or lysine. This Shigella sonnei (strain Ss046) protein is Leucyl/phenylalanyl-tRNA--protein transferase.